Here is a 101-residue protein sequence, read N- to C-terminus: Small ribosomal subunit protein uS17 (101 aa).

Belongs to the universal ribosomal protein uS17 family. In terms of assembly, part of the 30S ribosomal subunit.

One of the primary rRNA binding proteins, it binds specifically to the 5'-end of 16S ribosomal RNA. The protein is Small ribosomal subunit protein uS17 of Koribacter versatilis (strain Ellin345).